The chain runs to 35 residues: Photosystem II reaction center protein T (35 aa).

The chain crosses the membrane as a helical span at residues 3-23 (ALVYTFLLVSTLGIIFFAIFF).

It belongs to the PsbT family. In terms of assembly, PSII is composed of 1 copy each of membrane proteins PsbA, PsbB, PsbC, PsbD, PsbE, PsbF, PsbH, PsbI, PsbJ, PsbK, PsbL, PsbM, PsbT, PsbY, PsbZ, Psb30/Ycf12, at least 3 peripheral proteins of the oxygen-evolving complex and a large number of cofactors. It forms dimeric complexes.

It localises to the plastid. Its subcellular location is the chloroplast thylakoid membrane. Found at the monomer-monomer interface of the photosystem II (PS II) dimer, plays a role in assembly and dimerization of PSII. PSII is a light-driven water plastoquinone oxidoreductase, using light energy to abstract electrons from H(2)O, generating a proton gradient subsequently used for ATP formation. This Ginkgo biloba (Ginkgo) protein is Photosystem II reaction center protein T.